We begin with the raw amino-acid sequence, 520 residues long: Dynein axonemal assembly factor 8 (520 aa).

Disordered stretches follow at residues 93–202 (PVLV…LRQE), 217–256 (RDACGPTSSDKGGVKEAPCHAAESAPRSKMPLVEPPEGPP), 328–366 (CARKVPADTPQDTKEADSGSRCASRKQGSQAGPGPQLAQ), and 388–520 (DHLS…LEQL). Residues 111-125 (RTKDASSQEGRDPGR) are compositionally biased toward basic and acidic residues. Ser161 bears the Phosphoserine mark. Ser351 is subject to Phosphoserine. A compositionally biased stretch (acidic residues) spans 401-410 (DSEEEEEEEM). Over residues 420 to 437 (SPSSLGLRTCTGKSQLLQ) the composition is skewed to polar residues.

Expressed in respiratory ciliated cells (at protein level).

It localises to the dynein axonemal particle. It is found in the cytoplasm. In cyliated cells, dynein axonemal particle-specific protein required for deployment of ODA to the axoneme. Interacts with outer dynein arm (ODA) subunits. In Homo sapiens (Human), this protein is Dynein axonemal assembly factor 8.